We begin with the raw amino-acid sequence, 170 residues long: Lipoprotein signal peptidase (170 aa).

3 consecutive transmembrane segments (helical) span residues 12 to 32 (WYWVVVLVFVADQLSKQWVLA), 67 to 87 (WQRWLFTLVAVGFSTLLTVWL), and 93 to 113 (GLWRLNLAYTLVIGGALGNLI). Catalysis depends on residues Asp123 and Asp141. The chain crosses the membrane as a helical span at residues 133 to 153 (HFPAFNIADSAICVGAGLIIL).

This sequence belongs to the peptidase A8 family.

The protein resides in the cell inner membrane. The enzyme catalyses Release of signal peptides from bacterial membrane prolipoproteins. Hydrolyzes -Xaa-Yaa-Zaa-|-(S,diacylglyceryl)Cys-, in which Xaa is hydrophobic (preferably Leu), and Yaa (Ala or Ser) and Zaa (Gly or Ala) have small, neutral side chains.. Its pathway is protein modification; lipoprotein biosynthesis (signal peptide cleavage). In terms of biological role, this protein specifically catalyzes the removal of signal peptides from prolipoproteins. This chain is Lipoprotein signal peptidase, found in Shewanella loihica (strain ATCC BAA-1088 / PV-4).